A 307-amino-acid polypeptide reads, in one-letter code: N-acetylmuramic acid 6-phosphate etherase (307 aa).

The SIS domain occupies 60–223; sequence AAQAIARGGR…STGAMVRIGK (164 aa). Glu88 functions as the Proton donor in the catalytic mechanism. Residue Glu119 is part of the active site.

The protein belongs to the GCKR-like family. MurNAc-6-P etherase subfamily. Homodimer.

The catalysed reaction is N-acetyl-D-muramate 6-phosphate + H2O = N-acetyl-D-glucosamine 6-phosphate + (R)-lactate. The protein operates within amino-sugar metabolism; N-acetylmuramate degradation. Its function is as follows. Specifically catalyzes the cleavage of the D-lactyl ether substituent of MurNAc 6-phosphate, producing GlcNAc 6-phosphate and D-lactate. The sequence is that of N-acetylmuramic acid 6-phosphate etherase from Synechococcus elongatus (strain ATCC 33912 / PCC 7942 / FACHB-805) (Anacystis nidulans R2).